We begin with the raw amino-acid sequence, 87 residues long: UPF0147 protein AF_2370.1 (87 aa).

This sequence belongs to the UPF0147 family.

The chain is UPF0147 protein AF_2370.1 from Archaeoglobus fulgidus (strain ATCC 49558 / DSM 4304 / JCM 9628 / NBRC 100126 / VC-16).